The primary structure comprises 169 residues: Peptide deformylase (169 aa).

Fe cation is bound by residues Cys93 and His135. Glu136 is a catalytic residue. Position 139 (His139) interacts with Fe cation.

Belongs to the polypeptide deformylase family. It depends on Fe(2+) as a cofactor.

It catalyses the reaction N-terminal N-formyl-L-methionyl-[peptide] + H2O = N-terminal L-methionyl-[peptide] + formate. In terms of biological role, removes the formyl group from the N-terminal Met of newly synthesized proteins. Requires at least a dipeptide for an efficient rate of reaction. N-terminal L-methionine is a prerequisite for activity but the enzyme has broad specificity at other positions. This chain is Peptide deformylase, found in Aquifex aeolicus (strain VF5).